The sequence spans 550 residues: Iduronate 2-sulfatase (550 aa).

The N-terminal stretch at 1-25 (MPPPRTGRGLLWLGLVLSSVCVALG) is a signal peptide. The propeptide occupies 26–33 (SETQANST). Residues aspartate 45, aspartate 46, and cysteine 84 each contribute to the Ca(2+) site. The active-site Nucleophile is the cysteine 84. Cysteine 84 bears the 3-oxoalanine (Cys) mark. Asparagine 115 carries N-linked (GlcNAc...) asparagine glycosylation. The active site involves histidine 138. Residue asparagine 144 is glycosylated (N-linked (GlcNAc...) asparagine). Residues cysteine 171 and cysteine 184 are joined by a disulfide bond. 3 N-linked (GlcNAc...) asparagine glycosylation sites follow: asparagine 246, asparagine 280, and asparagine 325. Positions 334 and 335 each coordinate Ca(2+). Cysteine 422 and cysteine 432 are disulfide-bonded. Residues asparagine 513 and asparagine 537 are each glycosylated (N-linked (GlcNAc...) asparagine).

The protein belongs to the sulfatase family. As to quaternary structure, monomer. The 58-kDa mature form is composed of two chains resulting from proteolitic processing, the 42-kDa chain and the 14-kDa chain that remain stably associated and form the 58-kDa intermediate form which is enzymatically active. Requires Ca(2+) as cofactor. Post-translationally, synthesized as a 75-kDa precursor form in the endoplasmic reticulum (ER), and then processed by proteolytic cleavage through various intermediates to yield a 55-kDa mature form, with the release of an 18 kDa polypeptide. The conversion to 3-oxoalanine (also known as C-formylglycine, FGly), of a serine or cysteine residue in prokaryotes and of a cysteine residue in eukaryotes, is critical for catalytic activity. As to expression, liver, kidney, lung, and placenta.

It is found in the lysosome. The enzyme catalyses Hydrolysis of the 2-sulfate groups of the L-iduronate 2-sulfate units of dermatan sulfate, heparan sulfate and heparin.. In terms of biological role, lysosomal enzyme involved in the degradation pathway of dermatan sulfate and heparan sulfate. This Homo sapiens (Human) protein is Iduronate 2-sulfatase (IDS).